Reading from the N-terminus, the 28-residue chain is Potassium channel toxin alpha-KTx 9.7 (28 aa).

Cystine bridges form between cysteine 3–cysteine 19, cysteine 6–cysteine 24, and cysteine 10–cysteine 26.

In terms of tissue distribution, expressed by the venom gland.

Its subcellular location is the secreted. Its function is as follows. Calcium channel activator. Rapidly and reversibly activates ryanodine receptor 1 (RYR1). This chain is Potassium channel toxin alpha-KTx 9.7, found in Hottentotta judaicus (Black scorpion).